Reading from the N-terminus, the 94-residue chain is Large ribosomal subunit protein uL23 (94 aa).

The protein belongs to the universal ribosomal protein uL23 family. As to quaternary structure, part of the 50S ribosomal subunit. Contacts protein L29, and trigger factor when it is bound to the ribosome.

Its function is as follows. One of the early assembly proteins it binds 23S rRNA. One of the proteins that surrounds the polypeptide exit tunnel on the outside of the ribosome. Forms the main docking site for trigger factor binding to the ribosome. This chain is Large ribosomal subunit protein uL23, found in Dehalococcoides mccartyi (strain ATCC BAA-2100 / JCM 16839 / KCTC 5957 / BAV1).